We begin with the raw amino-acid sequence, 593 residues long: Histone-arginine methyltransferase CARMER (593 aa).

An SAM-dependent MTase PRMT-type domain is found at 122-429 (ASQYFQFYGY…QRQSYDVEMD (308 aa)). Positions 135, 144, 168, 190, 219, and 247 each coordinate S-adenosyl-L-methionine. Arg482 is modified (asymmetric dimethylarginine; by autocatalysis). A disordered region spans residues 521-540 (LISSTGRQQSQQQTTPAQPL). Residues 523 to 535 (SSTGRQQSQQQTT) show a composition bias toward low complexity.

It belongs to the class I-like SAM-binding methyltransferase superfamily. Protein arginine N-methyltransferase family. As to quaternary structure, homodimer. The dimethylated protein is the major form.

The protein resides in the cytoplasm. It is found in the nucleus. The enzyme catalyses L-arginyl-[protein] + 2 S-adenosyl-L-methionine = N(omega),N(omega)-dimethyl-L-arginyl-[protein] + 2 S-adenosyl-L-homocysteine + 2 H(+). In terms of biological role, methylates (mono- and asymmetric dimethylation) the guanidino nitrogens of arginyl residues in proteins. May methylate histone H3 at 'Arg-17' and activate transcription via chromatin remodeling. The chain is Histone-arginine methyltransferase CARMER from Aedes aegypti (Yellowfever mosquito).